The chain runs to 117 residues: NADH-ubiquinone oxidoreductase chain 3 (117 aa).

A run of 3 helical transmembrane segments spans residues 1–21, 57–77, and 86–106; these read MLMLSIMATIIFIITIVVMML, FFLIAIIFLIFDVEIALLLPM, and LMNWTMTSFFFIFILLIGLYH.

The protein belongs to the complex I subunit 3 family.

Its subcellular location is the mitochondrion membrane. The enzyme catalyses a ubiquinone + NADH + 5 H(+)(in) = a ubiquinol + NAD(+) + 4 H(+)(out). Core subunit of the mitochondrial membrane respiratory chain NADH dehydrogenase (Complex I) that is believed to belong to the minimal assembly required for catalysis. Complex I functions in the transfer of electrons from NADH to the respiratory chain. The immediate electron acceptor for the enzyme is believed to be ubiquinone. The sequence is that of NADH-ubiquinone oxidoreductase chain 3 (ND3) from Anopheles quadrimaculatus (Common malaria mosquito).